Here is a 361-residue protein sequence, read N- to C-terminus: Phosphoserine aminotransferase (361 aa).

Residues Ser9 and Arg42 each coordinate L-glutamate. Residues 76–77 (AR), Trp103, Thr153, Asp173, and Gln196 contribute to the pyridoxal 5'-phosphate site. Residue Lys197 is modified to N6-(pyridoxal phosphate)lysine. 238–239 (NT) is a binding site for pyridoxal 5'-phosphate.

The protein belongs to the class-V pyridoxal-phosphate-dependent aminotransferase family. SerC subfamily. In terms of assembly, homodimer. Requires pyridoxal 5'-phosphate as cofactor.

Its subcellular location is the cytoplasm. The catalysed reaction is O-phospho-L-serine + 2-oxoglutarate = 3-phosphooxypyruvate + L-glutamate. It carries out the reaction 4-(phosphooxy)-L-threonine + 2-oxoglutarate = (R)-3-hydroxy-2-oxo-4-phosphooxybutanoate + L-glutamate. Its pathway is amino-acid biosynthesis; L-serine biosynthesis; L-serine from 3-phospho-D-glycerate: step 2/3. The protein operates within cofactor biosynthesis; pyridoxine 5'-phosphate biosynthesis; pyridoxine 5'-phosphate from D-erythrose 4-phosphate: step 3/5. Functionally, catalyzes the reversible conversion of 3-phosphohydroxypyruvate to phosphoserine and of 3-hydroxy-2-oxo-4-phosphonooxybutanoate to phosphohydroxythreonine. The protein is Phosphoserine aminotransferase of Wigglesworthia glossinidia brevipalpis.